The sequence spans 244 residues: Ribonuclease 3 (244 aa).

The RNase III domain occupies 7-134 (FEEVEKTLNI…IIAAIYIDSG (128 aa)). Glutamate 47 contributes to the Mg(2+) binding site. Residue aspartate 51 is part of the active site. Residues asparagine 120 and glutamate 123 each contribute to the Mg(2+) site. Residue glutamate 123 is part of the active site. A DRBM domain is found at 161-230 (DYKTNLQEIV…AQDALKKLKS (70 aa)).

Belongs to the ribonuclease III family. Homodimer. The cofactor is Mg(2+).

It localises to the cytoplasm. The enzyme catalyses Endonucleolytic cleavage to 5'-phosphomonoester.. Its function is as follows. Digests double-stranded RNA. Involved in the processing of primary rRNA transcript to yield the immediate precursors to the large and small rRNAs (23S and 16S). Processes some mRNAs, and tRNAs when they are encoded in the rRNA operon. Processes pre-crRNA and tracrRNA of type II CRISPR loci if present in the organism. In Clostridium kluyveri (strain NBRC 12016), this protein is Ribonuclease 3.